The chain runs to 416 residues: Serine hydroxymethyltransferase 1 (416 aa).

Residues Leu121 and 125–127 each bind (6S)-5,6,7,8-tetrahydrofolate; that span reads GHL. Residue Lys229 is modified to N6-(pyridoxal phosphate)lysine. (6S)-5,6,7,8-tetrahydrofolate contacts are provided by residues Glu245 and 354–356; that span reads SPF.

The protein belongs to the SHMT family. As to quaternary structure, homodimer. It depends on pyridoxal 5'-phosphate as a cofactor.

The protein resides in the cytoplasm. The catalysed reaction is (6R)-5,10-methylene-5,6,7,8-tetrahydrofolate + glycine + H2O = (6S)-5,6,7,8-tetrahydrofolate + L-serine. It functions in the pathway one-carbon metabolism; tetrahydrofolate interconversion. The protein operates within amino-acid biosynthesis; glycine biosynthesis; glycine from L-serine: step 1/1. Its function is as follows. Catalyzes the reversible interconversion of serine and glycine with tetrahydrofolate (THF) serving as the one-carbon carrier. This reaction serves as the major source of one-carbon groups required for the biosynthesis of purines, thymidylate, methionine, and other important biomolecules. Also exhibits THF-independent aldolase activity toward beta-hydroxyamino acids, producing glycine and aldehydes, via a retro-aldol mechanism. In Photobacterium profundum (strain SS9), this protein is Serine hydroxymethyltransferase 1.